Consider the following 147-residue polypeptide: 3-hydroxyacyl-[acyl-carrier-protein] dehydratase FabZ (147 aa).

The active site involves His50.

This sequence belongs to the thioester dehydratase family. FabZ subfamily.

The protein localises to the cytoplasm. It carries out the reaction a (3R)-hydroxyacyl-[ACP] = a (2E)-enoyl-[ACP] + H2O. Functionally, involved in unsaturated fatty acids biosynthesis. Catalyzes the dehydration of short chain beta-hydroxyacyl-ACPs and long chain saturated and unsaturated beta-hydroxyacyl-ACPs. The chain is 3-hydroxyacyl-[acyl-carrier-protein] dehydratase FabZ from Lactiplantibacillus plantarum (strain ATCC BAA-793 / NCIMB 8826 / WCFS1) (Lactobacillus plantarum).